A 203-amino-acid polypeptide reads, in one-letter code: Probable GTP-binding protein EngB (203 aa).

The 190-residue stretch at 1–190 (MPEIVLVGRS…LEALQERVRK (190 aa)) folds into the EngB-type G domain. GTP-binding positions include 8–15 (GRSNVGKS), 35–39 (GVTRK), 53–56 (DMPG), 132–135 (NKID), and 169–171 (ISA). Mg(2+) is bound by residues Ser-15 and Thr-37.

The protein belongs to the TRAFAC class TrmE-Era-EngA-EngB-Septin-like GTPase superfamily. EngB GTPase family. Requires Mg(2+) as cofactor.

Its function is as follows. Necessary for normal cell division and for the maintenance of normal septation. This is Probable GTP-binding protein EngB from Methanopyrus kandleri (strain AV19 / DSM 6324 / JCM 9639 / NBRC 100938).